The following is a 399-amino-acid chain: Phosphoglycerate kinase (399 aa).

Residues 21–23 (DFN), R36, 59–62 (HLGR), R120, and R158 contribute to the substrate site. Residues K209, G297, E328, and 355-358 (GGDS) contribute to the ATP site.

It belongs to the phosphoglycerate kinase family. In terms of assembly, monomer.

Its subcellular location is the cytoplasm. It catalyses the reaction (2R)-3-phosphoglycerate + ATP = (2R)-3-phospho-glyceroyl phosphate + ADP. The protein operates within carbohydrate degradation; glycolysis; pyruvate from D-glyceraldehyde 3-phosphate: step 2/5. In Streptococcus thermophilus (strain ATCC BAA-250 / LMG 18311), this protein is Phosphoglycerate kinase.